A 658-amino-acid chain; its full sequence is Carnitine O-palmitoyltransferase 2, mitochondrial (658 aa).

The transit peptide at methionine 1–leucine 25 directs the protein to the mitochondrion. Residues serine 26–leucine 178 are Mitochondrial matrix-facing. Lysine 69 bears the N6-succinyllysine mark. An N6-acetyllysine modification is found at lysine 79. Lysine 85 is modified (N6-succinyllysine). Residues asparagine 179–asparagine 208 constitute an intramembrane region (note=Mitochondrial inner membrane). Residues alanine 209–threonine 658 lie on the Mitochondrial matrix side of the membrane. At lysine 239 the chain carries N6-acetyllysine; alternate. N6-succinyllysine; alternate is present on lysine 239. Histidine 372 acts as the Proton acceptor in catalysis. Residue lysine 418 is modified to N6-acetyllysine; alternate. At lysine 418 the chain carries N6-succinyllysine; alternate. Lysine 424 and lysine 439 each carry N6-succinyllysine. Residue glycine 452–aspartate 464 coordinates CoA. Residues tyrosine 486, serine 488, and threonine 499 each contribute to the (R)-carnitine site. Lysine 510 bears the N6-acetyllysine; alternate mark. Lysine 510 bears the N6-succinyllysine; alternate mark.

It belongs to the carnitine/choline acetyltransferase family.

The protein resides in the mitochondrion inner membrane. It catalyses the reaction (R)-carnitine + hexadecanoyl-CoA = O-hexadecanoyl-(R)-carnitine + CoA. The enzyme catalyses octanoyl-CoA + (R)-carnitine = O-octanoyl-(R)-carnitine + CoA. The catalysed reaction is decanoyl-CoA + (R)-carnitine = O-decanoyl-(R)-carnitine + CoA. It carries out the reaction dodecanoyl-CoA + (R)-carnitine = O-dodecanoyl-R-carnitine + CoA. It catalyses the reaction tetradecanoyl-CoA + (R)-carnitine = O-tetradecanoyl-(R)-carnitine + CoA. The enzyme catalyses (R)-carnitine + octadecanoyl-CoA = O-octadecanoyl-(R)-carnitine + CoA. The catalysed reaction is eicosanoyl-CoA + (R)-carnitine = O-eicosanoyl-(R)-carnitine + CoA. It carries out the reaction (9Z)-tetradecenoyl-CoA + (R)-carnitine = O-(9Z)-tetradecenoyl-(R)-carnitine + CoA. It catalyses the reaction (5Z)-tetradecenoyl-CoA + (R)-carnitine = O-(5Z)-tetradecenoyl-(R)-carnitine + CoA. The enzyme catalyses (R)-carnitine + (9Z)-octadecenoyl-CoA = O-(9Z)-octadecenoyl-(R)-carnitine + CoA. The catalysed reaction is 4,8-dimethylnonanoyl-CoA + (R)-carnitine = O-4,8-dimethylnonanoyl-(R)-carnitine + CoA. The protein operates within lipid metabolism; fatty acid beta-oxidation. Functionally, involved in the intramitochondrial synthesis of acylcarnitines from accumulated acyl-CoA metabolites. Reconverts acylcarnitines back into the respective acyl-CoA esters that can then undergo beta-oxidation, an essential step for the mitochondrial uptake of long-chain fatty acids and their subsequent beta-oxidation in the mitochondrion. Active with medium (C8-C12) and long-chain (C14-C18) acyl-CoA esters. In Bos taurus (Bovine), this protein is Carnitine O-palmitoyltransferase 2, mitochondrial (CPT2).